Consider the following 1335-residue polypeptide: Regulatory-associated protein of mTOR (1335 aa).

Residues serine 44 and serine 122 each carry the phosphoserine modification. Serine 696 carries the post-translational modification Phosphoserine; by MAPK8. O-linked (GlcNAc) threonine glycosylation is present at threonine 700. Threonine 706 bears the Phosphothreonine; by MAPK8 mark. A phosphoserine; by RPS6KA1 mark is found at serine 719 and serine 721. Position 722 is a phosphoserine; by AMPK and RPS6KA1 (serine 722). At serine 738 the chain carries Phosphoserine. Serine 791 is modified (phosphoserine; by PKA). The residue at position 792 (serine 792) is a Phosphoserine; by AMPK. Serine 836 and serine 855 each carry phosphoserine. The segment at 850–943 (VLDTSSLTQS…PEQTADDADD (94 aa)) is disordered. The segment covering 851–866 (LDTSSLTQSAPASPTN) has biased composition (polar residues). Serine 859 is subject to Phosphoserine; by MTOR. At serine 863 the chain carries Phosphoserine; by MAPK8, MTOR and NLK. Position 865 is a phosphothreonine (threonine 865). Residues 874–887 (AGGSPPASSTSSSS) show a composition bias toward low complexity. At serine 877 the chain carries Phosphoserine; by TBK1. Residues lysine 932 and lysine 948 each participate in a glycyl lysine isopeptide (Lys-Gly) (interchain with G-Cter in ubiquitin) cross-link. Serine 982 carries the post-translational modification Phosphoserine. 7 WD repeats span residues 1020–1061 (NRNP…DYFH), 1065–1106 (PRYT…EKNP), 1121–1160 (TTRGAGMVVDWEQETGLLMSSGDVRIVRIWDTDREMKVQD), 1164–1203 (GADSCVTSLSCDSHRSLIVAGLGDGSIRVYDRRMALSECR), 1209–1249 (EHTA…SVNV), 1251–1291 (QIVK…NNIK), and 1299–1335 (QRVGAISCLAFHPHWPHLAVGSNDYYISVYSVEKRVR). N6-acetyllysine is present on lysine 1097.

The protein belongs to the WD repeat RAPTOR family. As to quaternary structure, part of the mechanistic target of rapamycin complex 1 (mTORC1) which contains MTOR, MLST8 and RPTOR. mTORC1 associates with AKT1S1/PRAS40, which inhibits its activity. mTORC1 associates with DEPTOR, which regulates its activity. mTORC1 binds to and is inhibited by FKBP12-rapamycin. Forms a complex with MTOR under both leucine-rich and -poor conditions. Interacts with (via TOS motifs) EIF4EBP1 and RPS6KB1; interaction is independent of its association with MTOR. Binds preferentially to poorly or non-phosphorylated forms of EIF4EBP1, and this binding is critical to the ability of MTOR to catalyze phosphorylation. Interacts with ULK1 in a nutrient-dependent manner; the interaction is reduced during starvation. Interacts with GTP-bound form of RagA/RRAGA or RagB/RRAGB and GDP-bound form of RagC/RRAGC or RagD/RRAGD, promoting recruitment of mTORC1 to the lysosomes. Interacts (when phosphorylated by AMPK) with 14-3-3 protein, leading to inhibition of its activity. Interacts with SPAG5; SPAG5 competes with MTOR for RPTOR-binding, resulting in decreased mTORC1 formation. Interacts with WAC; WAC positively regulates MTOR activity by promoting the assembly of the TTT complex composed of TELO2, TTI1 and TTI2 and the RUVBL complex composed of RUVBL1 and RUVBL2 into the TTT-RUVBL complex which leads to the dimerization of the mTORC1 complex and its subsequent activation. Interacts with G3BP1. The complex formed with G3BP1 and SPAG5 is increased by oxidative stress. Interacts with HTR6. Interacts with PIH1D1. Interacts with LARP1. Interacts with BRAT1. Interacts with SIK3. Interacts with SLC38A7; this interaction mediates the recruitment of mTORC1 to the lysosome and its subsequent activation. (Microbial infection) Interacts with vaccinia virus protein F17; this interaction dysregulates mTOR. In terms of processing, insulin-stimulated phosphorylation at Ser-863 by MTOR and MAPK8 regulates mTORC1 activity. Phosphorylated at Ser-863 by NLK in response to stress, disrupting the interaction with small GTPases Rag (RagA/RRAGA, RagB/RRAGB, RagC/RRAGC and/or RagD/RRAGD), thereby preventing lysosome recruitment and activation of the mTORC1 complex. Osmotic stress also induces phosphorylation at Ser-696, Thr-706 and Ser-863 by MAPK8. Ser-863 phosphorylation is required for phosphorylation at Ser-855 and Ser-859. In response to nutrient limitation, phosphorylated at Ser-722 and Ser-792 by AMPK; phosphorylation promotes interaction with 14-3-3 proteins, leading to negative regulation of the mTORC1 complex. Phosphorylation at Ser-722 and Ser-792 by AMPK in response to glucose starvation inhibits O-GlcNAcylation by OGT and subsequent activation of mTORC1. In response to growth factors, phosphorylated at Ser-719, Ser-721 and Ser-722 by RPS6KA1, which stimulates mTORC1 activity. Phosphorylation at Ser-791 by PKA downstream of cAMP inhibits the mTORC1 complex. Phosphorylated at Ser-877 by TBK1, leading to negative regulation of the mTORC1 complex. Post-translationally, O-GlcNAcylated by OGT upon glucose sufficiency, promoting interaction with small GTPases Rag (RagA/RRAGA, RagB/RRAGB, RagC/RRAGC and/or RagD/RRAGD) and subsequent recruitment of mTORC1 to lysosomal membranes, leading to activation of the mTORC1 complex. Phosphorylation at Ser-722 and Ser-792 by AMPK in response to glucose starvation inhibits O-GlcNAcylation. Acetylation at Lys-1097 by EP300/p300 in response to leucine metabolite acetyl-coA promotes its activity, leading to activation of the mTORC1 complex. Acetylation is decreased in response to fasting. In terms of processing, ubiquitinated, leading to its degradation by the proteasome. Deubiquitinated by OTUB1 via a non-catalytic mechanism. Ubiquitinated by an E3 ubiquitin ligase complex containing VHL. In terms of tissue distribution, highly expressed in skeletal muscle, and in a lesser extent in brain, lung, small intestine, kidney and placenta. Widely expressed, with highest levels in nasal mucosa and pituitary and lowest in spleen.

Its subcellular location is the lysosome membrane. It localises to the cytoplasm. The protein resides in the cytoplasmic granule. Component of the mechanistic target of rapamycin complex 1 (mTORC1), an evolutionarily conserved central nutrient sensor that stimulates anabolic reactions and macromolecule biosynthesis to promote cellular biomass generation and growth. In response to nutrients, growth factors or amino acids, mTORC1 is recruited to the lysosome membrane and promotes protein, lipid and nucleotide synthesis by phosphorylating several substrates, such as ribosomal protein S6 kinase (RPS6KB1 and RPS6KB2) and EIF4EBP1 (4E-BP1). In the same time, it inhibits catabolic pathways by phosphorylating the autophagy initiation components ULK1 and ATG13, as well as transcription factor TFEB, a master regulators of lysosomal biogenesis and autophagy. The mTORC1 complex is inhibited in response to starvation and amino acid depletion. Within the mTORC1 complex, RPTOR acts both as a molecular adapter, which (1) mediates recruitment of mTORC1 to lysosomal membranes via interaction with small GTPases Rag (RagA/RRAGA, RagB/RRAGB, RagC/RRAGC and/or RagD/RRAGD), and a (2) substrate-specific adapter, which promotes substrate specificity by binding to TOS motif-containing proteins and direct them towards the active site of the MTOR kinase domain for phosphorylation. mTORC1 complex regulates many cellular processes, such as odontoblast and osteoclast differentiation or neuronal transmission. mTORC1 complex in excitatory neuronal transmission is required for the prosocial behavior induced by the psychoactive substance lysergic acid diethylamide (LSD). This is Regulatory-associated protein of mTOR from Homo sapiens (Human).